We begin with the raw amino-acid sequence, 527 residues long: ATP synthase subunit alpha (527 aa).

169-176 is an ATP binding site; the sequence is GDRQTGKT.

It belongs to the ATPase alpha/beta chains family. F-type ATPases have 2 components, CF(1) - the catalytic core - and CF(0) - the membrane proton channel. CF(1) has five subunits: alpha(3), beta(3), gamma(1), delta(1), epsilon(1). CF(0) has three main subunits: a(1), b(2) and c(9-12). The alpha and beta chains form an alternating ring which encloses part of the gamma chain. CF(1) is attached to CF(0) by a central stalk formed by the gamma and epsilon chains, while a peripheral stalk is formed by the delta and b chains.

It localises to the cell membrane. The catalysed reaction is ATP + H2O + 4 H(+)(in) = ADP + phosphate + 5 H(+)(out). Produces ATP from ADP in the presence of a proton gradient across the membrane. The alpha chain is a regulatory subunit. The polypeptide is ATP synthase subunit alpha (Metamycoplasma arthritidis (strain 158L3-1) (Mycoplasma arthritidis)).